Reading from the N-terminus, the 590-residue chain is Aspartate--tRNA(Asp/Asn) ligase (590 aa).

Position 172 (glutamate 172) interacts with L-aspartate. Positions 196-199 (QLFK) are aspartate. L-aspartate is bound at residue arginine 218. ATP-binding positions include 218-220 (RDE) and glutamine 227. Residue histidine 449 coordinates L-aspartate. Glutamate 484 lines the ATP pocket. An L-aspartate-binding site is contributed by arginine 491. 536 to 539 (GIDR) is an ATP binding site.

It belongs to the class-II aminoacyl-tRNA synthetase family. Type 1 subfamily. As to quaternary structure, homodimer.

Its subcellular location is the cytoplasm. It catalyses the reaction tRNA(Asx) + L-aspartate + ATP = L-aspartyl-tRNA(Asx) + AMP + diphosphate. Aspartyl-tRNA synthetase with relaxed tRNA specificity since it is able to aspartylate not only its cognate tRNA(Asp) but also tRNA(Asn). Reaction proceeds in two steps: L-aspartate is first activated by ATP to form Asp-AMP and then transferred to the acceptor end of tRNA(Asp/Asn). The protein is Aspartate--tRNA(Asp/Asn) ligase of Francisella tularensis subsp. tularensis (strain SCHU S4 / Schu 4).